A 980-amino-acid chain; its full sequence is GPI inositol-deacylase (980 aa).

Over 1–7 the chain is Cytoplasmic; it reads MFMFRNC. Residues 8–28 traverse the membrane as a helical segment; that stretch reads AVLLVIGSICCFIYGLFRLHV. The Lumenal portion of the chain corresponds to 29 to 628; sequence EVEPNACRMT…EYSYSSALSR (600 aa). Serine 170 is a catalytic residue. N-linked (GlcNAc...) asparagine glycosylation is found at asparagine 427, asparagine 517, and asparagine 596. A helical transmembrane segment spans residues 629-649; the sequence is LVLEFYGWLPAHLVCVLLIVL. Topologically, residues 650–709 are cytoplasmic; sequence RKQVETFYDVGTFRSLRPYVGYLQYTSLYIVTACRLLKKLIISSRVFPEPEPLDYSINVS. A helical membrane pass occupies residues 710–730; it reads IVIHCAAIALSLLATLGTWLA. Topologically, residues 731-774 are lumenal; that stretch reads LTLYGNAFYRLALRITRLSQATSNVMISIMTHLPITYGILTIAT. The chain crosses the membrane as a helical span at residues 775 to 795; the sequence is AMGTCSGVGLLLAFVFYFLML. The Cytoplasmic segment spans residues 796–867; that stretch reads SNAYKDYLED…CVGLQNFSFH (72 aa). Residues 821-853 are disordered; sequence AVTEQEDATEEQNEEQNALKQNDEQKQQQQEEE. A compositionally biased stretch (acidic residues) spans 824–834; it reads EQEDATEEQNE. A helical membrane pass occupies residues 868-888; sequence VTLLLMLFVQLLLNAPSSLAW. Over 889 to 895 the chain is Lumenal; sequence LRSRRHG. Residues 896–916 form a helical membrane-spanning segment; sequence INLPDPSLYPSIVVLASLSLL. Topologically, residues 917–929 are cytoplasmic; that stretch reads LQLRAPQKCQGYW. The helical transmembrane segment at 930–950 threads the bilayer; it reads MLSIAFYILAGVVLLYCQAAI. Topologically, residues 951 to 954 are lumenal; the sequence is YRLT. Residues 955 to 975 form a helical membrane-spanning segment; it reads YVIAGAFALLSAHQSLWILWG. Over 976 to 980 the chain is Cytoplasmic; the sequence is RVSRV.

The protein belongs to the GPI inositol-deacylase family.

It is found in the endoplasmic reticulum membrane. In terms of biological role, involved in inositol deacylation of GPI-anchored proteins. The protein is GPI inositol-deacylase of Drosophila melanogaster (Fruit fly).